Reading from the N-terminus, the 552-residue chain is CCR4-NOT transcription complex subunit 6 (552 aa).

4 LRR repeats span residues 52–73, 75–96, 98–120, and 121–143; these read HLTA…IAKL, NLVY…LGNM, SLRE…GKLF, and QLQT…CLEP. The tract at residues 153–552 is nuclease domain; that stretch reads LLDNLSVSTE…VNGIHLPGRR (400 aa). Glu235 serves as a coordination point for Mg(2+). Substrate-binding residues include Glu235, Glu271, His356, and Pro361. Asp407 lines the Mg(2+) pocket. Asp407 functions as the Proton donor/acceptor in the catalytic mechanism. Substrate contacts are provided by Asn409, Asn476, and Phe481.

It belongs to the CCR4/nocturin family. As to quaternary structure, subunit of the CCR4-NOT core complex. It depends on Mg(2+) as a cofactor.

The protein resides in the cytoplasm. It localises to the nucleus. It catalyses the reaction Exonucleolytic cleavage of poly(A) to 5'-AMP.. In terms of biological role, poly(A) nuclease involved in mRNA decay. Has 3'-5' RNase activity. The CCR4-NOT complex functions as a general transcription regulation complex. Enhances ligand-dependent transcriptional activity of nuclear hormone receptors. This Xenopus laevis (African clawed frog) protein is CCR4-NOT transcription complex subunit 6 (cnot6).